The primary structure comprises 310 residues: Tagatose-6-phosphate kinase (310 aa).

Belongs to the carbohydrate kinase PfkB family. LacC subfamily.

It carries out the reaction D-tagatofuranose 6-phosphate + ATP = D-tagatofuranose 1,6-bisphosphate + ADP + H(+). Its pathway is carbohydrate metabolism; D-tagatose 6-phosphate degradation; D-glyceraldehyde 3-phosphate and glycerone phosphate from D-tagatose 6-phosphate: step 1/2. The chain is Tagatose-6-phosphate kinase from Streptococcus agalactiae serotype V (strain ATCC BAA-611 / 2603 V/R).